We begin with the raw amino-acid sequence, 172 residues long: Ribosome maturation factor RimM (172 aa).

The PRC barrel domain occupies aspartate 96–leucine 168.

This sequence belongs to the RimM family. As to quaternary structure, binds ribosomal protein uS19.

The protein resides in the cytoplasm. In terms of biological role, an accessory protein needed during the final step in the assembly of 30S ribosomal subunit, possibly for assembly of the head region. Essential for efficient processing of 16S rRNA. May be needed both before and after RbfA during the maturation of 16S rRNA. It has affinity for free ribosomal 30S subunits but not for 70S ribosomes. The chain is Ribosome maturation factor RimM from Streptococcus agalactiae serotype III (strain NEM316).